A 38-amino-acid chain; its full sequence is MKVRASIKKMCRNCKLVRRKGVLRVICSAEPRHKQRQG.

Belongs to the bacterial ribosomal protein bL36 family.

The polypeptide is Large ribosomal subunit protein bL36 (Saccharophagus degradans (strain 2-40 / ATCC 43961 / DSM 17024)).